The following is a 322-amino-acid chain: MPVHSREKKESNHNDMEVDYPENEGTSSEEDDSDSSSGSEEGDSSEMDDEDCERRRMECLDEMSNLEKQFTDLKDQLYKERLSQVDAKLQEVIAGKAPEYLEPLANLQENMQIRTKVAGIYRELCLESVKNKHDCEIQAARQHCESEKLLLYDTVQSELEEKIRRLEEDRHSIDITSELWNDELQSRRKRKDPFSPDKKKKPVVVSGPYIVYMLQDLDILEDWTTIRKAMASFGPHRVKPEVTVKMEKHQHSARSEEGRLHYDGEWYGRGQTICIDKKDEFPTSAVITTINSDEVWFKRQDGSKSKLYISQLQKGKYSIKHI.

The segment covering 1-16 (MPVHSREKKESNHNDM) has biased composition (basic and acidic residues). Positions 1 to 56 (MPVHSREKKESNHNDMEVDYPENEGTSSEEDDSDSSSGSEEGDSSEMDDEDCERRR) are disordered. Positions 17 to 51 (EVDYPENEGTSSEEDDSDSSSGSEEGDSSEMDDED) are enriched in acidic residues. 2 coiled-coil regions span residues 50-82 (EDCE…KERL) and 147-178 (EKLL…ITSE).

It belongs to the BRMS1 family.

Its subcellular location is the nucleus. Functionally, involved in the histone deacetylase (HDAC1)-dependent transcriptional repression activity. This chain is Breast cancer metastasis-suppressor 1-like protein (brms1l), found in Xenopus tropicalis (Western clawed frog).